The following is a 469-amino-acid chain: Adenosylhomocysteinase (469 aa).

The substrate site is built by Thr-63, Asp-139, and Glu-164. 165 to 167 (TTT) is a binding site for NAD(+). 2 residues coordinate substrate: Lys-194 and Asp-198. Residues Asn-199, 228 to 233 (GYGDVG), Glu-251, Asn-300, 321 to 323 (IGH), and Asn-375 contribute to the NAD(+) site.

Belongs to the adenosylhomocysteinase family. Requires NAD(+) as cofactor.

It is found in the cytoplasm. The catalysed reaction is S-adenosyl-L-homocysteine + H2O = L-homocysteine + adenosine. The protein operates within amino-acid biosynthesis; L-homocysteine biosynthesis; L-homocysteine from S-adenosyl-L-homocysteine: step 1/1. May play a key role in the regulation of the intracellular concentration of adenosylhomocysteine. The polypeptide is Adenosylhomocysteinase (Pseudomonas aeruginosa (strain LESB58)).